Here is a 434-residue protein sequence, read N- to C-terminus: Glutamate-1-semialdehyde 2,1-aminomutase 1 (434 aa).

Lys-270 is modified (N6-(pyridoxal phosphate)lysine).

It belongs to the class-III pyridoxal-phosphate-dependent aminotransferase family. HemL subfamily. Homodimer. Pyridoxal 5'-phosphate is required as a cofactor.

The protein localises to the cytoplasm. It catalyses the reaction (S)-4-amino-5-oxopentanoate = 5-aminolevulinate. The protein operates within porphyrin-containing compound metabolism; protoporphyrin-IX biosynthesis; 5-aminolevulinate from L-glutamyl-tRNA(Glu): step 2/2. The protein is Glutamate-1-semialdehyde 2,1-aminomutase 1 of Bacillus cereus (strain ATCC 10987 / NRS 248).